The chain runs to 689 residues: Long-chain fatty acid transport protein 5 (689 aa).

The Cytoplasmic segment spans residues 1 to 29 (MGIWKKLTLLLLLLLLVGLGQPPWPAAMA). The next 2 helical transmembrane spans lie at 30–50 (LALRWFLGDPTCLVLLGLALL) and 55–75 (ISSWMPHWLSLVGAALTLFLL). At 76–689 (PLQPPPGLRW…QAVCEGTWNL (614 aa)) the chain is on the cytoplasmic side. Residue 292-303 (IFTSGTTGLPKP) coordinates AMP.

Belongs to the ATP-dependent AMP-binding enzyme family. As to expression, liver-specific (at protein level). In liver expressed in a periportal distribution.

The protein localises to the endoplasmic reticulum membrane. Its subcellular location is the microsome. It is found in the cell membrane. The enzyme catalyses a fatty acid(in) = a fatty acid(out). It carries out the reaction cholate + ATP + CoA = choloyl-CoA + AMP + diphosphate. The catalysed reaction is (25R)-3alpha,7alpha,12alpha-trihydroxy-5beta-cholestan-26-oate + ATP + CoA = (25R)-3alpha,7alpha,12alpha-trihydroxy-5beta-cholestan-26-oyl-CoA + AMP + diphosphate. It catalyses the reaction chenodeoxycholate + ATP + CoA = chenodeoxycholoyl-CoA + AMP + diphosphate. The enzyme catalyses deoxycholate + ATP + CoA = deoxycholoyl-CoA + AMP + diphosphate. It carries out the reaction lithocholate + ATP + CoA = lithocholoyl-CoA + AMP + diphosphate. The catalysed reaction is a very long-chain fatty acid + ATP + CoA = a very long-chain fatty acyl-CoA + AMP + diphosphate. It catalyses the reaction tetracosanoate + ATP + CoA = tetracosanoyl-CoA + AMP + diphosphate. The enzyme catalyses hexacosanoate + ATP + CoA = hexacosanoyl-CoA + AMP + diphosphate. It carries out the reaction a long-chain fatty acid + ATP + CoA = a long-chain fatty acyl-CoA + AMP + diphosphate. The catalysed reaction is octadecanoate + ATP + CoA = octadecanoyl-CoA + AMP + diphosphate. It catalyses the reaction eicosanoate + ATP + CoA = eicosanoyl-CoA + AMP + diphosphate. Mediates the import of long-chain fatty acids (LCFA) by facilitating their transport across cell membranes. Also catalyzes the ATP-dependent formation of fatty acyl-CoA using LCFA and very-long-chain fatty acids (VLCFA) as substrates. Mainly functions as a bile acyl-CoA synthetase catalyzing the activation of bile acids via ATP-dependent formation of bile acid CoA thioesters which is necessary for their subsequent conjugation with glycine or taurine. Both primary bile acids (cholic acid and chenodeoxycholic acid) and secondary bile acids (deoxycholic acid and lithocholic acid) are the principal substrates. In vitro, activates 3-alpha,7-alpha,12-alpha-trihydroxy-5-beta-cholestanate ((25R)-3alpha,7alpha,12alpha-trihydroxy-5beta-cholestan-26-oate or THCA), the C27 precursor of cholic acid deriving from the de novo synthesis from cholesterol. Plays an important role in hepatic fatty acid uptake and bile acid reconjugation and recycling but not in de novo synthesis of bile acids. In Mus musculus (Mouse), this protein is Long-chain fatty acid transport protein 5 (Slc27a5).